A 395-amino-acid chain; its full sequence is General transcription factor IIH subunit 2 (395 aa).

The VWFA domain occupies 60 to 236; that stretch reads HLYVVVDGSR…HYKELLTHHV (177 aa). Tyr-95 is subject to Phosphotyrosine. The C4-type zinc finger occupies 291–308; that stretch reads CPQCRAKYCELPVECKIC.

Belongs to the GTF2H2 family. As to quaternary structure, component of the TFIID-containing RNA polymerase II pre-initiation complex that is composed of TBP and at least GTF2A1, GTF2A2, GTF2E1, GTF2E2, GTF2F1, GTF2H2, GTF2H3, GTF2H4, GTF2H5, GTF2B, TCEA1, ERCC2 and ERCC3. Component of the 7-subunit TFIIH core complex composed of XPB/ERCC3, XPD/ERCC2, GTF2H1, GTF2H2, GTF2H3, GTF2H4 and GTF2H5, which is active in NER. The core complex associates with the 3-subunit CDK-activating kinase (CAK) module composed of CCNH/cyclin H, CDK7 and MNAT1 to form the 10-subunit holoenzyme (holo-TFIIH) active in transcription. Interacts with XPB, XPD, GTF2H1 and GTF2H3. (Microbial infection) Interacts with varicella-zoster virus IE63 protein. As to expression, widely expressed, with higher expression in skeletal muscle.

It is found in the nucleus. In terms of biological role, component of the general transcription and DNA repair factor IIH (TFIIH) core complex, which is involved in general and transcription-coupled nucleotide excision repair (NER) of damaged DNA and, when complexed to CAK, in RNA transcription by RNA polymerase II. In NER, TFIIH acts by opening DNA around the lesion to allow the excision of the damaged oligonucleotide and its replacement by a new DNA fragment. In transcription, TFIIH has an essential role in transcription initiation. When the pre-initiation complex (PIC) has been established, TFIIH is required for promoter opening and promoter escape. Phosphorylation of the C-terminal tail (CTD) of the largest subunit of RNA polymerase II by the kinase module CAK controls the initiation of transcription. The N-terminus of GTF2H2 interacts with and regulates XPD whereas an intact C-terminus is required for a successful escape of RNAP II form the promoter. This chain is General transcription factor IIH subunit 2 (GTF2H2), found in Homo sapiens (Human).